The primary structure comprises 350 residues: uncharacterized protein (350 aa).

Transmembrane regions (helical) follow at residues 10 to 30 (YSFI…EVIG), 51 to 71 (FAGI…VTLT), and 327 to 347 (ILSL…LKLF).

This sequence belongs to the 1-acyl-sn-glycerol-3-phosphate acyltransferase family.

Its subcellular location is the endoplasmic reticulum membrane. This is an uncharacterized protein from Schizosaccharomyces pombe (strain 972 / ATCC 24843) (Fission yeast).